The primary structure comprises 939 residues: Isoleucine--tRNA ligase (939 aa).

A 'HIGH' region motif is present at residues 58–68 (PYANGNIHIGH). Glutamate 562 provides a ligand contact to L-isoleucyl-5'-AMP. Residues 603–607 (KMSKS) carry the 'KMSKS' region motif. Lysine 606 contributes to the ATP binding site. Zn(2+)-binding residues include cysteine 903, cysteine 906, cysteine 922, and cysteine 925.

This sequence belongs to the class-I aminoacyl-tRNA synthetase family. IleS type 1 subfamily. As to quaternary structure, monomer. The cofactor is Zn(2+).

Its subcellular location is the cytoplasm. The catalysed reaction is tRNA(Ile) + L-isoleucine + ATP = L-isoleucyl-tRNA(Ile) + AMP + diphosphate. Its function is as follows. Catalyzes the attachment of isoleucine to tRNA(Ile). As IleRS can inadvertently accommodate and process structurally similar amino acids such as valine, to avoid such errors it has two additional distinct tRNA(Ile)-dependent editing activities. One activity is designated as 'pretransfer' editing and involves the hydrolysis of activated Val-AMP. The other activity is designated 'posttransfer' editing and involves deacylation of mischarged Val-tRNA(Ile). The protein is Isoleucine--tRNA ligase of Buchnera aphidicola subsp. Baizongia pistaciae (strain Bp).